A 154-amino-acid chain; its full sequence is MKRIEAYTDGACSGNPGPGGWGAILRWNDNVKELKGGEADTTNNRMELMAAISALSALKEPCEVDLYTDSVYVRDGISGWIEGWKRNGWKTAAKKPVKNAELWQALDEARKPHKVNWHWVKGHAGHPENERADELAREGMEPFKYGGRKSLKVQ.

Positions 1-141 constitute an RNase H type-1 domain; that stretch reads MKRIEAYTDG…ADELAREGME (141 aa). Positions 9, 47, 69, and 133 each coordinate Mg(2+).

The protein belongs to the RNase H family. As to quaternary structure, monomer. The cofactor is Mg(2+).

Its subcellular location is the cytoplasm. The enzyme catalyses Endonucleolytic cleavage to 5'-phosphomonoester.. In terms of biological role, endonuclease that specifically degrades the RNA of RNA-DNA hybrids. This Brucella anthropi (strain ATCC 49188 / DSM 6882 / CCUG 24695 / JCM 21032 / LMG 3331 / NBRC 15819 / NCTC 12168 / Alc 37) (Ochrobactrum anthropi) protein is Ribonuclease H.